Reading from the N-terminus, the 493-residue chain is 2-amino-4-deoxychorismate synthase (493 aa).

This sequence belongs to the anthranilate synthase component I family. Mg(2+) serves as cofactor.

It carries out the reaction (2S)-2-amino-4-deoxychorismate + L-glutamate = chorismate + L-glutamine. Its function is as follows. Converts chorismate to 2-amino-4-deoxychorismate (ADIC). Involved in the biosynthesis of the benzoxazolinate moiety of the enediyne antitumor antibiotic C-1027. This is 2-amino-4-deoxychorismate synthase (sgcD) from Streptomyces globisporus.